The primary structure comprises 307 residues: Elongation factor Ts (307 aa).

Residues 80–83 (TDFV) are involved in Mg(2+) ion dislocation from EF-Tu.

It belongs to the EF-Ts family.

The protein localises to the cytoplasm. Its function is as follows. Associates with the EF-Tu.GDP complex and induces the exchange of GDP to GTP. It remains bound to the aminoacyl-tRNA.EF-Tu.GTP complex up to the GTP hydrolysis stage on the ribosome. The polypeptide is Elongation factor Ts (Methylobacterium nodulans (strain LMG 21967 / CNCM I-2342 / ORS 2060)).